A 906-amino-acid chain; its full sequence is NACHT, LRR and PYD domains-containing protein 1b allele 4 (906 aa).

The tract at residues 1-22 (MEESPPKQKSNTKVAQHEGQQD) is disordered. The region spanning 126 to 435 (QLVIIEGAAG…EFFAAISCIL (310 aa)) is the NACHT domain. 132–139 (GAAGIGKS) is an ATP binding site. LRR repeat units lie at residues 627–647 (NLEG…QSLC) and 684–704 (SLTE…RMLC). The 118-residue stretch at 789–906 (FWGPTGPVAT…FQEHGSRNAR (118 aa)) folds into the FIIND (incomplete) domain.

Belongs to the NLRP family. Expressed in macrophages.

The protein resides in the cytoplasm. Its subcellular location is the cytosol. Functionally, probable inactive allele of Nlrp1b, which lacks a CARD domain, suggesting that it is not able to form an inflammasome. Contrary to Nlrp1b allele 1, allele 4 is not activated by B.anthracis lethal toxin and no other activation signal is reported. The chain is NACHT, LRR and PYD domains-containing protein 1b allele 4 from Mus musculus (Mouse).